The following is a 596-amino-acid chain: Elongation factor 4 (596 aa).

Positions 2–184 (RNIRNFSIIA…AIVHRIPPPT (183 aa)) constitute a tr-type G domain. Residues 14 to 19 (DHGKST) and 131 to 134 (NKID) each bind GTP.

The protein belongs to the TRAFAC class translation factor GTPase superfamily. Classic translation factor GTPase family. LepA subfamily.

The protein resides in the cell inner membrane. It catalyses the reaction GTP + H2O = GDP + phosphate + H(+). Its function is as follows. Required for accurate and efficient protein synthesis under certain stress conditions. May act as a fidelity factor of the translation reaction, by catalyzing a one-codon backward translocation of tRNAs on improperly translocated ribosomes. Back-translocation proceeds from a post-translocation (POST) complex to a pre-translocation (PRE) complex, thus giving elongation factor G a second chance to translocate the tRNAs correctly. Binds to ribosomes in a GTP-dependent manner. The polypeptide is Elongation factor 4 (Xanthomonas oryzae pv. oryzae (strain PXO99A)).